We begin with the raw amino-acid sequence, 347 residues long: MSSETKSEFGTKSAWLYNRTGKPKDVLYLEKGLHIPNPAELGPYDVLVEVVATSINPLDYKLMNTYQMIAKALFKLPNIPGYDFAGRVLAVGSEVKEFSATQRVWGCQSFPRAGRQGGSCATHIVTGDKDVWHLPDGVSFNEGAGFGIAGLTAWEVLVRQMKVKPGTKLVIEGASGGVGTFAVALAKALECEVTTISSTENLDLCKSLGATHTLDYKKDNLVERLADLGPYDFVFDCVNDNVLYRASSKFVKPDGAFFGIGGDITLSYVGSRLSRTLRPRVLGGSSHSYYNILLHVDQEMLRDFVDFVMKHNIKTVIDSVYDFEDTVEAFNRLMTHRCKGKVIIKTD.

It belongs to the zinc-containing alcohol dehydrogenase family. Quinone oxidoreductase subfamily.

It is found in the golgi apparatus. The protein localises to the endoplasmic reticulum. The protein is Zinc-type alcohol dehydrogenase-like protein C16A3.02c of Schizosaccharomyces pombe (strain 972 / ATCC 24843) (Fission yeast).